We begin with the raw amino-acid sequence, 205 residues long: Dephospho-CoA kinase (205 aa).

One can recognise a DPCK domain in the interval 7–204 (LVGLTGGIGS…ARYLAAARAT (198 aa)). 15 to 20 (GSGKSA) contacts ATP.

It belongs to the CoaE family.

The protein resides in the cytoplasm. The catalysed reaction is 3'-dephospho-CoA + ATP = ADP + CoA + H(+). It participates in cofactor biosynthesis; coenzyme A biosynthesis; CoA from (R)-pantothenate: step 5/5. In terms of biological role, catalyzes the phosphorylation of the 3'-hydroxyl group of dephosphocoenzyme A to form coenzyme A. The chain is Dephospho-CoA kinase from Aromatoleum aromaticum (strain DSM 19018 / LMG 30748 / EbN1) (Azoarcus sp. (strain EbN1)).